A 915-amino-acid polypeptide reads, in one-letter code: Protein translocase subunit SecA (915 aa).

ATP-binding positions include Gln87, Gly105–Thr109, and Asp516. A disordered region spans residues Met866–Ser915. The Zn(2+) site is built by Cys899, Cys901, Cys910, and His911. Residues Lys905–Ser915 are compositionally biased toward basic residues.

The protein belongs to the SecA family. In terms of assembly, monomer and homodimer. Part of the essential Sec protein translocation apparatus which comprises SecA, SecYEG and auxiliary proteins SecDF-YajC and YidC. Requires Zn(2+) as cofactor.

The protein localises to the cell inner membrane. It is found in the cytoplasm. It catalyses the reaction ATP + H2O + cellular proteinSide 1 = ADP + phosphate + cellular proteinSide 2.. Its function is as follows. Part of the Sec protein translocase complex. Interacts with the SecYEG preprotein conducting channel. Has a central role in coupling the hydrolysis of ATP to the transfer of proteins into and across the cell membrane, serving both as a receptor for the preprotein-SecB complex and as an ATP-driven molecular motor driving the stepwise translocation of polypeptide chains across the membrane. This Delftia acidovorans (strain DSM 14801 / SPH-1) protein is Protein translocase subunit SecA.